Reading from the N-terminus, the 147-residue chain is Large ribosomal subunit protein bL9 (147 aa).

This sequence belongs to the bacterial ribosomal protein bL9 family.

Functionally, binds to the 23S rRNA. The polypeptide is Large ribosomal subunit protein bL9 (Campylobacter hominis (strain ATCC BAA-381 / DSM 21671 / CCUG 45161 / LMG 19568 / NCTC 13146 / CH001A)).